A 306-amino-acid chain; its full sequence is MLKGRHLIDAMDFSIEELEEIFKLSNEIISREKEFSHICEGKLLATLFYEPSTRTRLSFESAMLRLGGKVMGFSEPGSSSASKGESIADTIRVISCYADIAAMRHPKEGAPKIAAMYSNIPVINAGDGGHQHPTQTLTDLLTVKSIKGRLSNLKIGCCGDLKFGRTVHSLIKAMSRYENNSFTLISPEELKIPNYLKKELNSKNVKYEETKNLEDSIESLDILYMTRVQRERFFNEEDYIRLKDSYILDKGKISRAAKDMIVLHPLPRVNEISYEIDKDPRAYYFKQAKYGMYVRMALMIKLLGIQ.

Carbamoyl phosphate-binding residues include R54 and T55. Position 83 (K83) interacts with L-aspartate. The carbamoyl phosphate site is built by R104, H132, and Q135. Positions 165 and 227 each coordinate L-aspartate. 2 residues coordinate carbamoyl phosphate: L266 and P267.

The protein belongs to the aspartate/ornithine carbamoyltransferase superfamily. ATCase family. As to quaternary structure, heterododecamer (2C3:3R2) of six catalytic PyrB chains organized as two trimers (C3), and six regulatory PyrI chains organized as three dimers (R2).

It catalyses the reaction carbamoyl phosphate + L-aspartate = N-carbamoyl-L-aspartate + phosphate + H(+). Its pathway is pyrimidine metabolism; UMP biosynthesis via de novo pathway; (S)-dihydroorotate from bicarbonate: step 2/3. In terms of biological role, catalyzes the condensation of carbamoyl phosphate and aspartate to form carbamoyl aspartate and inorganic phosphate, the committed step in the de novo pyrimidine nucleotide biosynthesis pathway. This chain is Aspartate carbamoyltransferase catalytic subunit, found in Clostridium kluyveri (strain NBRC 12016).